Reading from the N-terminus, the 515-residue chain is 2-isopropylmalate synthase (515 aa).

In terms of domain architecture, Pyruvate carboxyltransferase spans 5–268 (VIIFDTTLRD…VCGIDASQIV (264 aa)). Positions 14, 202, 204, and 239 each coordinate Mn(2+). Positions 394 to 515 (HFISLSQHSE…QAKLNAQMAP (122 aa)) are regulatory domain.

It belongs to the alpha-IPM synthase/homocitrate synthase family. LeuA type 1 subfamily. In terms of assembly, homodimer. The cofactor is Mn(2+).

The protein localises to the cytoplasm. It carries out the reaction 3-methyl-2-oxobutanoate + acetyl-CoA + H2O = (2S)-2-isopropylmalate + CoA + H(+). The protein operates within amino-acid biosynthesis; L-leucine biosynthesis; L-leucine from 3-methyl-2-oxobutanoate: step 1/4. In terms of biological role, catalyzes the condensation of the acetyl group of acetyl-CoA with 3-methyl-2-oxobutanoate (2-ketoisovalerate) to form 3-carboxy-3-hydroxy-4-methylpentanoate (2-isopropylmalate). The protein is 2-isopropylmalate synthase of Polynucleobacter asymbioticus (strain DSM 18221 / CIP 109841 / QLW-P1DMWA-1) (Polynucleobacter necessarius subsp. asymbioticus).